Reading from the N-terminus, the 318-residue chain is Beta-galactosidase small subunit (318 aa).

It belongs to the bacterial beta-galactosidase small subunit family. As to quaternary structure, heterodimer of a large (LacL) and a small subunit (LacM).

The enzyme catalyses Hydrolysis of terminal non-reducing beta-D-galactose residues in beta-D-galactosides.. Component of a beta-galactosidase. This chain is Beta-galactosidase small subunit, found in Lactobacillus helveticus (Lactobacillus suntoryeus).